The primary structure comprises 276 residues: ATP synthase subunit a (276 aa).

The next 6 helical transmembrane spans lie at 47-67 (WHID…WLFY), 107-127 (IAPL…MDLI), 152-172 (DLNV…FYSI), 188-208 (PFNH…TLVA), 226-246 (LIFI…SVPW), and 247-267 (AIFH…LTIV).

The protein belongs to the ATPase A chain family. As to quaternary structure, F-type ATPases have 2 components, CF(1) - the catalytic core - and CF(0) - the membrane proton channel. CF(1) has five subunits: alpha(3), beta(3), gamma(1), delta(1), epsilon(1). CF(0) has three main subunits: a(1), b(2) and c(9-12). The alpha and beta chains form an alternating ring which encloses part of the gamma chain. CF(1) is attached to CF(0) by a central stalk formed by the gamma and epsilon chains, while a peripheral stalk is formed by the delta and b chains.

It is found in the cell inner membrane. Functionally, key component of the proton channel; it plays a direct role in the translocation of protons across the membrane. This is ATP synthase subunit a from Shewanella pealeana (strain ATCC 700345 / ANG-SQ1).